The sequence spans 55 residues: Large ribosomal subunit protein bL33 (55 aa).

It belongs to the bacterial ribosomal protein bL33 family.

This is Large ribosomal subunit protein bL33 from Methylacidiphilum infernorum (isolate V4) (Methylokorus infernorum (strain V4)).